The chain runs to 402 residues: Phosphomevalonate dehydratase large subunit (402 aa).

The (R)-5-phosphomevalonate site is built by glycine 48, alanine 49, serine 50, asparagine 79, and proline 80. Cysteine 122 serves as a coordination point for [4Fe-4S] cluster. 2 residues coordinate (R)-5-phosphomevalonate: glutamate 145 and serine 146. Residues cysteine 297 and cysteine 356 each coordinate [4Fe-4S] cluster. Lysine 377 is a binding site for (R)-5-phosphomevalonate.

Belongs to the AcnX type II large subunit family. As to quaternary structure, heterodimer composed of a large subunit (PMDh-L) and a small subunit (PMDh-S). The cofactor is [4Fe-4S] cluster.

The catalysed reaction is (R)-5-phosphomevalonate = (2E)-3-methyl-5-phosphooxypent-2-enoate + H2O. Its pathway is isoprenoid biosynthesis; isopentenyl diphosphate biosynthesis via mevalonate pathway. Neither the addition of 1 mM Mg(2+) nor 1 mM Mn(2+) has a significant effect on the activity, whereas Zn(2+) causes almost complete inactivation. Strongly inhibited by H(2)O(2), but not by EDTA or iodoacetamide. Component of a hydro-lyase that catalyzes the dehydration of mevalonate 5-phosphate (MVA5P) to form trans-anhydromevalonate 5-phosphate (tAHMP). Involved in the archaeal mevalonate (MVA) pathway, which provides fundamental precursors for isoprenoid biosynthesis, such as isopentenyl diphosphate (IPP) and dimethylallyl diphosphate (DMAPP). The polypeptide is Phosphomevalonate dehydratase large subunit (Aeropyrum pernix (strain ATCC 700893 / DSM 11879 / JCM 9820 / NBRC 100138 / K1)).